Consider the following 154-residue polypeptide: Major allergen Dau c 1 (154 aa).

The protein belongs to the BetVI family. As to quaternary structure, homodimer.

This Daucus carota (Wild carrot) protein is Major allergen Dau c 1.